Here is a 165-residue protein sequence, read N- to C-terminus: SsrA-binding protein (165 aa).

Positions 141–165 are disordered; that stretch reads KLHDKRQEEKRKQADREVKSALARY. The segment covering 145–159 has biased composition (basic and acidic residues); it reads KRQEEKRKQADREVK.

It belongs to the SmpB family.

Its subcellular location is the cytoplasm. Required for rescue of stalled ribosomes mediated by trans-translation. Binds to transfer-messenger RNA (tmRNA), required for stable association of tmRNA with ribosomes. tmRNA and SmpB together mimic tRNA shape, replacing the anticodon stem-loop with SmpB. tmRNA is encoded by the ssrA gene; the 2 termini fold to resemble tRNA(Ala) and it encodes a 'tag peptide', a short internal open reading frame. During trans-translation Ala-aminoacylated tmRNA acts like a tRNA, entering the A-site of stalled ribosomes, displacing the stalled mRNA. The ribosome then switches to translate the ORF on the tmRNA; the nascent peptide is terminated with the 'tag peptide' encoded by the tmRNA and targeted for degradation. The ribosome is freed to recommence translation, which seems to be the essential function of trans-translation. The chain is SsrA-binding protein from Prochlorococcus marinus (strain MIT 9303).